The primary structure comprises 129 residues: Small ribosomal subunit protein uS11 (129 aa).

The protein belongs to the universal ribosomal protein uS11 family. Part of the 30S ribosomal subunit. Interacts with proteins S7 and S18. Binds to IF-3.

In terms of biological role, located on the platform of the 30S subunit, it bridges several disparate RNA helices of the 16S rRNA. Forms part of the Shine-Dalgarno cleft in the 70S ribosome. The chain is Small ribosomal subunit protein uS11 from Sinorhizobium medicae (strain WSM419) (Ensifer medicae).